The chain runs to 199 residues: Imidazoleglycerol-phosphate dehydratase (199 aa).

This sequence belongs to the imidazoleglycerol-phosphate dehydratase family.

It is found in the cytoplasm. The enzyme catalyses D-erythro-1-(imidazol-4-yl)glycerol 3-phosphate = 3-(imidazol-4-yl)-2-oxopropyl phosphate + H2O. Its pathway is amino-acid biosynthesis; L-histidine biosynthesis; L-histidine from 5-phospho-alpha-D-ribose 1-diphosphate: step 6/9. The polypeptide is Imidazoleglycerol-phosphate dehydratase (Lactococcus lactis subsp. cremoris (strain MG1363)).